The chain runs to 412 residues: cAMP-dependent protein kinase regulatory subunit (412 aa).

The tract at residues 1–142 (MSFEEVYEEL…RLKRSVAGNF (142 aa)) is dimerization and phosphorylation. Positions 101–105 (RRQSV) match the Pseudophosphorylation motif motif. Ser-104 is subject to Phosphoserine. Residues 143-277 (LFKN…EEVP), Glu-224, Arg-233, 278-412 (ILSS…STKA), Glu-344, and Arg-353 contribute to the 3',5'-cyclic AMP site. The interval 392–412 (MGMDNEYGDQSLHRSPPSTKA) is disordered.

The protein belongs to the cAMP-dependent kinase regulatory chain family. As to quaternary structure, tetramer, composed of 2 regulatory (R) and 2 catalytic (C) subunits. In the presence of cAMP it dissociates into 2 active monomeric C subunits and an R dimer.

The polypeptide is cAMP-dependent protein kinase regulatory subunit (cgs1) (Schizosaccharomyces pombe (strain 972 / ATCC 24843) (Fission yeast)).